We begin with the raw amino-acid sequence, 306 residues long: MSATLPDVAVTEAFTLSAPLRWVGMQDIAIPVHLDAASGSGLAARASVQVDLPRAELKGIHMSRLYRLLDLHLQRPLSPAMLPQLLQALIESHADCASRAARLTLSFALMLRMPALRSEGLSGWRAYPVRIAAQCRAGRTTIQLQVEVLYASTCPCSAALSRQLLSDAFVQQHAWCDALPLQDVAQWLQDHGSYATPHSQRSVAQVCVDLPADTQGFAIQELIGLCEQALATPVQAAVRRPDEQAFARLNGANLMYVEDAARRLRKQLAEHYATFHVAVRHLESLHAHDAVAETGSDDETFFPAAL.

The protein belongs to the GTP cyclohydrolase IV family.

It carries out the reaction GTP + H2O = 7,8-dihydroneopterin 3'-triphosphate + formate + H(+). It participates in cofactor biosynthesis; 7,8-dihydroneopterin triphosphate biosynthesis; 7,8-dihydroneopterin triphosphate from GTP: step 1/1. Converts GTP to 7,8-dihydroneopterin triphosphate. The protein is GTP cyclohydrolase FolE2 of Xanthomonas oryzae pv. oryzae (strain MAFF 311018).